The following is a 198-amino-acid chain: Ribonuclease HII (198 aa).

The 189-residue stretch at 10-198 folds into the RNase H type-2 domain; that stretch reads QLVAGVDEVG…PVKRALGLAS (189 aa). Asp16, Glu17, and Asp108 together coordinate a divalent metal cation.

This sequence belongs to the RNase HII family. Mn(2+) is required as a cofactor. The cofactor is Mg(2+).

Its subcellular location is the cytoplasm. The catalysed reaction is Endonucleolytic cleavage to 5'-phosphomonoester.. In terms of biological role, endonuclease that specifically degrades the RNA of RNA-DNA hybrids. This chain is Ribonuclease HII, found in Shigella sonnei (strain Ss046).